The following is a 438-amino-acid chain: Protein maelstrom 2 (438 aa).

A DNA-binding region (HMG box) is located at residues 2 to 69; the sequence is APKKRNGFMT…LERTAKKERL (68 aa). A disordered region spans residues 374 to 438; sequence KEMGSRDLSP…NMGAGKKIAR (65 aa). Polar residues predominate over residues 381 to 391; that stretch reads LSPSSSHQSVS.

It belongs to the maelstrom family.

The protein resides in the cytoplasm. It is found in the nucleus. In terms of biological role, involved both in the piRNA and miRNA metabolic processes. As a component of the meiotic nuage, plays a central role during oogenesis by repressing transposable elements and preventing their mobilization, which is essential for the germline integrity. Repression of transposable elements is mediated via the piRNA metabolic process, which mediates the repression of transposable elements during meiosis by forming complexes composed of piRNAs and Piwi proteins and governs the repression of transposons. As a nuclear component, it is required for proper differentiation in the germline stem cell (GSC) lineage by repressing microRNA-7 (miR-7), thereby acting as an indirect regulator of bag-of-marbles (Bam). Acts by binding to the promoter of miR-7 gene and repressing its expression; miR-7 repression alleviates the Bam repression by miR-7, thereby allowing differentiation in the germline stem cell (GSC) lineage. The sequence is that of Protein maelstrom 2 (mael2) from Drosophila persimilis (Fruit fly).